Consider the following 507-residue polypeptide: Extracellular elastase (507 aa).

The N-terminal stretch at 1–28 is a signal peptide; sequence MKNFSKFALTSIAALTVASPLVNTEVDA. A propeptide spanning residues 29-207 is cleaved from the precursor; that stretch reads KDKVSATQNI…VVDKLNMIKE (179 aa). D347 contributes to the Ca(2+) binding site. H351 is a Zn(2+) binding site. Residue E352 is part of the active site. Positions 355 and 375 each coordinate Zn(2+). Ca(2+) contacts are provided by D386, E388, D389, L391, E394, Y397, T398, V401, and D404. The Proton donor role is filled by H435.

Belongs to the peptidase M4 family. Requires Ca(2+) as cofactor. Zn(2+) serves as cofactor.

It is found in the secreted. Its function is as follows. Protease that has a low substrate specificity. Glucagon is preferentially cleaved between aromatic (Phe) and hydrophobic (Val) amino acids. Hydrolyzes casein and elastin. This chain is Extracellular elastase (sepA), found in Staphylococcus epidermidis.